A 118-amino-acid polypeptide reads, in one-letter code: Beta-2-microglobulin (118 aa).

The signal sequence occupies residues 1 to 20 (MARVVALVLLGLLSLTGLEA). Residues 22–115 (PRVPKVQVYS…LKDPLIVKWD (94 aa)) enclose the Ig-like C1-type domain. A disulfide bond links Cys45 and Cys99.

This sequence belongs to the beta-2-microglobulin family. Heterodimer of an alpha chain and a beta chain. Beta-2-microglobulin is the beta-chain of major histocompatibility complex class I molecules.

Its subcellular location is the secreted. Its function is as follows. Component of the class I major histocompatibility complex (MHC). Involved in the presentation of peptide antigens to the immune system. The chain is Beta-2-microglobulin (B2M) from Equus caballus (Horse).